The chain runs to 485 residues: Adenosylhomocysteinase (485 aa).

Positions 64, 139, and 205 each coordinate substrate. An NAD(+)-binding site is contributed by 206–208 (TTT). Lys-235 and Asp-239 together coordinate substrate. Residues Asn-240, 269 to 274 (GYGDVG), Glu-292, Asn-327, 348 to 350 (IGH), and Asn-397 each bind NAD(+).

This sequence belongs to the adenosylhomocysteinase family. As to quaternary structure, homotetramer. NAD(+) serves as cofactor.

It carries out the reaction S-adenosyl-L-homocysteine + H2O = L-homocysteine + adenosine. It participates in amino-acid biosynthesis; L-homocysteine biosynthesis; L-homocysteine from S-adenosyl-L-homocysteine: step 1/1. Adenosylhomocysteine is a competitive inhibitor of S-adenosyl-L-methionine-dependent methyl transferase reactions; therefore adenosylhomocysteinase may play a key role in the control of methylations via regulation of the intracellular concentration of adenosylhomocysteine. In Triticum aestivum (Wheat), this protein is Adenosylhomocysteinase (SAHH).